Reading from the N-terminus, the 424-residue chain is Pachytene checkpoint protein 2 homolog (424 aa).

Position 171-178 (171-178 (GPPGTGKT)) interacts with ATP.

It belongs to the AAA ATPase family. PCH2 subfamily.

Its function is as follows. Plays a key role in chromosome recombination and chromosome structure development during meiosis. Required at early steps in meiotic recombination that leads to non-crossovers pathways. Also needed for efficient completion of homologous synapsis by influencing crossover distribution along the chromosomes affecting both crossovers and non-crossovers pathways. In Danio rerio (Zebrafish), this protein is Pachytene checkpoint protein 2 homolog (trip13).